Consider the following 321-residue polypeptide: MSDRMAKFKAGMPKDAIEALKQEFKDNYDTNKDGTVSCAELVKLMNWTEEMAQNIIARLDVNSDGHMQFDEFILYMEGSTKERLYSSDEIKQMFDDLDKDGNGRISPDELNKGVREIYTKVVDGMANKLIQEADKDGDGHVNMEEFFDTLVVKLPIGMGPCKDEEYREYYKNEFEKFDKNGDGSLTTAEMSEFMSKSTKYSDKEIEYLISRVDLNDDGRVQFNEFFMHLDGVSKDHIKQQFMAIDKDKNGKISPEEMVFGITKIYRQMVDFEVAKLIKESSFEDDDGYINFNEFVNRFFSNCPYKINSLYWPIYLGCAVSI.

8 EF-hand domains span residues 15–49, 47–82, 85–120, 121–156, 165–200, 200–233, 232–267, and 269–304; these read DAIE…NWTE, WTEE…STKE, YSSD…IYTK, VVDG…KLPI, EYRE…STKY, YSDK…DGVS, VSKD…IYRQ, and VDFE…NCPY. Asp-29, Asn-31, Asp-33, Thr-35, Glu-40, Asp-60, Asn-62, Asp-64, His-66, Glu-71, Asp-98, Asp-100, Asn-102, Arg-104, Glu-109, Asp-134, Asp-136, Asp-138, His-140, Glu-145, Asp-178, Asn-180, Asp-182, Ser-184, Glu-189, Asp-213, Asn-215, Asp-217, Arg-219, Glu-224, Asp-245, Asp-247, Asn-249, Lys-251, Glu-256, Asp-284, Asp-286, Tyr-288, and Glu-293 together coordinate Ca(2+).

In terms of tissue distribution, aboral ectoderm, a squamous epithelium covering the surface of the late stage embryo and larva.

Calcium-binding protein involved in larval development and metamorphosis. Likely to function as calcium buffers mediating the transport of calcium from the sea water to the blastocoel where calcium is required for skeleton formation. The chain is Calcium-binding protein LPS1-alpha from Lytechinus pictus (Painted sea urchin).